The chain runs to 166 residues: NAD(P)H-quinone oxidoreductase subunit I, chloroplastic (166 aa).

4Fe-4S ferredoxin-type domains lie at 55–84 (GRIH…VDWK) and 95–124 (LNYS…MTEE). The [4Fe-4S] cluster site is built by C64, C67, C70, C74, C104, C107, C110, and C114.

This sequence belongs to the complex I 23 kDa subunit family. In terms of assembly, NDH is composed of at least 16 different subunits, 5 of which are encoded in the nucleus. Requires [4Fe-4S] cluster as cofactor.

It is found in the plastid. The protein resides in the chloroplast thylakoid membrane. The catalysed reaction is a plastoquinone + NADH + (n+1) H(+)(in) = a plastoquinol + NAD(+) + n H(+)(out). It catalyses the reaction a plastoquinone + NADPH + (n+1) H(+)(in) = a plastoquinol + NADP(+) + n H(+)(out). In terms of biological role, NDH shuttles electrons from NAD(P)H:plastoquinone, via FMN and iron-sulfur (Fe-S) centers, to quinones in the photosynthetic chain and possibly in a chloroplast respiratory chain. The immediate electron acceptor for the enzyme in this species is believed to be plastoquinone. Couples the redox reaction to proton translocation, and thus conserves the redox energy in a proton gradient. The sequence is that of NAD(P)H-quinone oxidoreductase subunit I, chloroplastic from Chamaechaenactis scaposa (Fullstem).